The following is a 719-amino-acid chain: Phosphoribosylformylglycinamidine synthase subunit PurL (719 aa).

Residue His47 is part of the active site. ATP-binding residues include Tyr50 and Lys89. Glu91 is a binding site for Mg(2+). Residues 92–95 (SHNH) and Arg114 contribute to the substrate site. His93 serves as the catalytic Proton acceptor. Position 115 (Asp115) interacts with Mg(2+). Substrate is bound at residue Gln238. Asp266 serves as a coordination point for Mg(2+). Residue 310 to 312 (ESQ) coordinates substrate. 2 residues coordinate ATP: Asp488 and Gly525. Asn526 contributes to the Mg(2+) binding site. Residue Ser528 participates in substrate binding.

The protein belongs to the FGAMS family. Monomer. Part of the FGAM synthase complex composed of 1 PurL, 1 PurQ and 2 PurS subunits.

The protein resides in the cytoplasm. The catalysed reaction is N(2)-formyl-N(1)-(5-phospho-beta-D-ribosyl)glycinamide + L-glutamine + ATP + H2O = 2-formamido-N(1)-(5-O-phospho-beta-D-ribosyl)acetamidine + L-glutamate + ADP + phosphate + H(+). It functions in the pathway purine metabolism; IMP biosynthesis via de novo pathway; 5-amino-1-(5-phospho-D-ribosyl)imidazole from N(2)-formyl-N(1)-(5-phospho-D-ribosyl)glycinamide: step 1/2. Functionally, part of the phosphoribosylformylglycinamidine synthase complex involved in the purines biosynthetic pathway. Catalyzes the ATP-dependent conversion of formylglycinamide ribonucleotide (FGAR) and glutamine to yield formylglycinamidine ribonucleotide (FGAM) and glutamate. The FGAM synthase complex is composed of three subunits. PurQ produces an ammonia molecule by converting glutamine to glutamate. PurL transfers the ammonia molecule to FGAR to form FGAM in an ATP-dependent manner. PurS interacts with PurQ and PurL and is thought to assist in the transfer of the ammonia molecule from PurQ to PurL. This Cereibacter sphaeroides (strain ATCC 17025 / ATH 2.4.3) (Rhodobacter sphaeroides) protein is Phosphoribosylformylglycinamidine synthase subunit PurL.